A 635-amino-acid chain; its full sequence is Chaperone protein DnaK (635 aa).

Position 200 is a phosphothreonine; by autocatalysis (Thr-200). The segment at 595–635 is disordered; sequence KAQPLTEKVQAKSSAENTSKEKSKADDDVVDADFEEVKDDK. Over residues 612-621 the composition is skewed to basic and acidic residues; sequence TSKEKSKADD. The span at 622–635 shows a compositional bias: acidic residues; sequence DVVDADFEEVKDDK.

This sequence belongs to the heat shock protein 70 family.

Its function is as follows. Acts as a chaperone. This Ruthia magnifica subsp. Calyptogena magnifica protein is Chaperone protein DnaK.